A 477-amino-acid polypeptide reads, in one-letter code: Methylenetetrahydrofolate--tRNA-(uracil-5-)-methyltransferase TrmFO (477 aa).

15-20 (GAGLAG) contributes to the FAD binding site.

It belongs to the MnmG family. TrmFO subfamily. FAD serves as cofactor.

It is found in the cytoplasm. The enzyme catalyses uridine(54) in tRNA + (6R)-5,10-methylene-5,6,7,8-tetrahydrofolate + NADH + H(+) = 5-methyluridine(54) in tRNA + (6S)-5,6,7,8-tetrahydrofolate + NAD(+). The catalysed reaction is uridine(54) in tRNA + (6R)-5,10-methylene-5,6,7,8-tetrahydrofolate + NADPH + H(+) = 5-methyluridine(54) in tRNA + (6S)-5,6,7,8-tetrahydrofolate + NADP(+). Its function is as follows. Catalyzes the folate-dependent formation of 5-methyl-uridine at position 54 (M-5-U54) in all tRNAs. The chain is Methylenetetrahydrofolate--tRNA-(uracil-5-)-methyltransferase TrmFO from Nitrobacter winogradskyi (strain ATCC 25391 / DSM 10237 / CIP 104748 / NCIMB 11846 / Nb-255).